The sequence spans 475 residues: UDP-N-acetylmuramate--L-alanine ligase (475 aa).

Residue 117-123 coordinates ATP; it reads GTHGKTT.

Belongs to the MurCDEF family.

The protein localises to the cytoplasm. The enzyme catalyses UDP-N-acetyl-alpha-D-muramate + L-alanine + ATP = UDP-N-acetyl-alpha-D-muramoyl-L-alanine + ADP + phosphate + H(+). The protein operates within cell wall biogenesis; peptidoglycan biosynthesis. Functionally, cell wall formation. The polypeptide is UDP-N-acetylmuramate--L-alanine ligase (Chlorobaculum tepidum (strain ATCC 49652 / DSM 12025 / NBRC 103806 / TLS) (Chlorobium tepidum)).